Here is a 287-residue protein sequence, read N- to C-terminus: 4-hydroxybenzoate octaprenyltransferase (287 aa).

8 helical membrane-spanning segments follow: residues 19 to 39, 43 to 63, 94 to 116, 135 to 155, 160 to 180, 207 to 227, 234 to 254, and 269 to 286; these read PIGS…AADG, LHVL…GCVI, LALA…PLVI, FFAI…PMGF, GEVP…AVAY, FDVA…GWVG, ALYF…YTLI, and NNWL…DYLI.

The protein belongs to the UbiA prenyltransferase family. Mg(2+) is required as a cofactor.

The protein localises to the cell inner membrane. It carries out the reaction all-trans-octaprenyl diphosphate + 4-hydroxybenzoate = 4-hydroxy-3-(all-trans-octaprenyl)benzoate + diphosphate. The protein operates within cofactor biosynthesis; ubiquinone biosynthesis. Its function is as follows. Catalyzes the prenylation of para-hydroxybenzoate (PHB) with an all-trans polyprenyl group. Mediates the second step in the final reaction sequence of ubiquinone-8 (UQ-8) biosynthesis, which is the condensation of the polyisoprenoid side chain with PHB, generating the first membrane-bound Q intermediate 3-octaprenyl-4-hydroxybenzoate. This chain is 4-hydroxybenzoate octaprenyltransferase, found in Azoarcus sp. (strain BH72).